The chain runs to 103 residues: Small ribosomal subunit protein uS10 (103 aa).

Belongs to the universal ribosomal protein uS10 family. In terms of assembly, part of the 30S ribosomal subunit.

Involved in the binding of tRNA to the ribosomes. The protein is Small ribosomal subunit protein uS10 of Sphingopyxis alaskensis (strain DSM 13593 / LMG 18877 / RB2256) (Sphingomonas alaskensis).